A 258-amino-acid polypeptide reads, in one-letter code: ER membrane protein complex subunit 3 (258 aa).

The next 3 membrane-spanning stretches (helical) occupy residues 8–28 (PALRNWVLLPIMFVMILIGIL), 123–143 (VVPQTIIMTWINEFFSGFILL), and 173–193 (SISWYFLNLFGLKSVYALLLG).

It belongs to the EMC3 family.

The protein localises to the cytoplasm. It localises to the membrane. This Schizosaccharomyces pombe (strain 972 / ATCC 24843) (Fission yeast) protein is ER membrane protein complex subunit 3.